A 153-amino-acid polypeptide reads, in one-letter code: Cystatin-9 (153 aa).

Residues 1–27 form the signal peptide; sequence MGRQRRCRWAQPWTLLLLLLGPRLLVT.

Belongs to the cystatin family.

It is found in the secreted. Functionally, may play a role in hematopoietic differentiation or inflammation. This is Cystatin-9 (CST9) from Bos taurus (Bovine).